The sequence spans 273 residues: NADPH-dependent 7-cyano-7-deazaguanine reductase (273 aa).

A substrate-binding site is contributed by 80–82; that stretch reads VES. 82 to 83 contacts NADPH; sequence SK. The active-site Thioimide intermediate is cysteine 180. Aspartate 187 acts as the Proton donor in catalysis. 219–220 contributes to the substrate binding site; the sequence is HE. Position 248–249 (248–249) interacts with NADPH; sequence RG.

This sequence belongs to the GTP cyclohydrolase I family. QueF type 2 subfamily. In terms of assembly, homodimer.

Its subcellular location is the cytoplasm. It carries out the reaction 7-aminomethyl-7-carbaguanine + 2 NADP(+) = 7-cyano-7-deazaguanine + 2 NADPH + 3 H(+). The protein operates within tRNA modification; tRNA-queuosine biosynthesis. In terms of biological role, catalyzes the NADPH-dependent reduction of 7-cyano-7-deazaguanine (preQ0) to 7-aminomethyl-7-deazaguanine (preQ1). The polypeptide is NADPH-dependent 7-cyano-7-deazaguanine reductase (Bordetella pertussis (strain Tohama I / ATCC BAA-589 / NCTC 13251)).